A 537-amino-acid chain; its full sequence is CTP synthase (537 aa).

Residues 1–267 are amidoligase domain; that stretch reads MTKYIFVTGG…DQIVLDHFDV (267 aa). Serine 13 serves as a coordination point for CTP. Serine 13 provides a ligand contact to UTP. 14–19 lines the ATP pocket; that stretch reads SIGKGI. Residue tyrosine 54 coordinates L-glutamine. Residue aspartate 71 coordinates ATP. Aspartate 71 and glutamate 141 together coordinate Mg(2+). CTP contacts are provided by residues 148 to 150, 188 to 193, and lysine 224; these read DIE and KTKPTQ. UTP contacts are provided by residues 188 to 193 and lysine 224; that span reads KTKPTQ. One can recognise a Glutamine amidotransferase type-1 domain in the interval 292-535; the sequence is KIALVGKYVA…IDAANQTGKV (244 aa). Residue glycine 354 participates in L-glutamine binding. Cysteine 381 serves as the catalytic Nucleophile; for glutamine hydrolysis. L-glutamine contacts are provided by residues 382–385, glutamate 405, and arginine 463; that span reads LGMQ. Residues histidine 508 and glutamate 510 contribute to the active site.

This sequence belongs to the CTP synthase family. In terms of assembly, homotetramer.

The catalysed reaction is UTP + L-glutamine + ATP + H2O = CTP + L-glutamate + ADP + phosphate + 2 H(+). It carries out the reaction L-glutamine + H2O = L-glutamate + NH4(+). It catalyses the reaction UTP + NH4(+) + ATP = CTP + ADP + phosphate + 2 H(+). The protein operates within pyrimidine metabolism; CTP biosynthesis via de novo pathway; CTP from UDP: step 2/2. With respect to regulation, allosterically activated by GTP, when glutamine is the substrate; GTP has no effect on the reaction when ammonia is the substrate. The allosteric effector GTP functions by stabilizing the protein conformation that binds the tetrahedral intermediate(s) formed during glutamine hydrolysis. Inhibited by the product CTP, via allosteric rather than competitive inhibition. In terms of biological role, catalyzes the ATP-dependent amination of UTP to CTP with either L-glutamine or ammonia as the source of nitrogen. Regulates intracellular CTP levels through interactions with the four ribonucleotide triphosphates. The polypeptide is CTP synthase (Lactiplantibacillus plantarum (strain ATCC BAA-793 / NCIMB 8826 / WCFS1) (Lactobacillus plantarum)).